The primary structure comprises 106 residues: MNRNILEEMLQYLLIDWIVGDQFEIQLNQQLWSLIPNNDVRRLVSHVIRTLKTDCTETHLQLACAKLISRTGLLMKLLSEQQELRTVSMTAWKPRMNRKSRSRMRS.

The chain is Putative protein LRRC37A5P (LRRC37A5P) from Homo sapiens (Human).